A 127-amino-acid chain; its full sequence is Multiple antibiotic resistance protein MarA (127 aa).

The HTH araC/xylS-type domain maps to 12-110; sequence HSILDWIEDN…DVPPHKYRMT (99 aa). 2 DNA-binding regions (H-T-H motif) span residues 29 to 50 and 77 to 100; these read EKVS…KKET and ILYL…KNYF.

In terms of assembly, monomer.

In terms of biological role, may be a transcriptional activator of genes involved in the multiple antibiotic resistance (Mar) phenotype. It can also activate genes such as sodA, zwf and micF. This chain is Multiple antibiotic resistance protein MarA (marA), found in Escherichia coli (strain K12).